We begin with the raw amino-acid sequence, 219 residues long: 7-cyano-7-deazaguanine synthase (219 aa).

10 to 20 (FSGGQDSTTCL) provides a ligand contact to ATP. Positions 188, 197, 200, and 203 each coordinate Zn(2+).

Belongs to the QueC family. Homodimer. Requires Zn(2+) as cofactor.

It carries out the reaction 7-carboxy-7-deazaguanine + NH4(+) + ATP = 7-cyano-7-deazaguanine + ADP + phosphate + H2O + H(+). Its pathway is purine metabolism; 7-cyano-7-deazaguanine biosynthesis. In terms of biological role, catalyzes the ATP-dependent conversion of 7-carboxy-7-deazaguanine (CDG) to 7-cyano-7-deazaguanine (preQ(0)). The chain is 7-cyano-7-deazaguanine synthase from Clostridium botulinum (strain Kyoto / Type A2).